Here is a 113-residue protein sequence, read N- to C-terminus: Single-stranded DNA-binding protein B (113 aa).

One can recognise an SSB domain in the interval 1 to 104 (MFNQVMLVGR…VLADTVRFMD (104 aa)). Y82 carries the phosphotyrosine modification.

As to quaternary structure, homotetramer. In terms of processing, phosphorylated by YwqD, which increases ssDNA affinity; dephosphorylated by YwqE.

Its subcellular location is the cytoplasm. Functionally, not essential for replication of the chromosome, but is required for optimal competence. Binds ssDNA, binding is facilitated by DprA, acts as an accessory factor for homologous DNA strand exchange. The protein is Single-stranded DNA-binding protein B (ssbB) of Bacillus subtilis (strain 168).